The sequence spans 423 residues: MKAELIAVGTEILTGQIVNTNAQFLSEKMAELGIDVYFQTAVGDNEERLLSVITTASQRSDLVILCGGLGPTKDDLTKQTLAKYLRKDLVYDEQACQKLDDFFAKRKPSSRTPNNERQAQVIEGSIPLPNKTGLAVGGFITVDGISYVVLPGPPSELKSMVNEELVPLLSKQYSTLYSKVLRFFGVGESQLVTVLSDFIENQTDPTIAPYAKTGEVTLRLSTKTENQALADKKLGQLEAQLLSRKTLEGQPLADVFYGYGEDNSLARETFELLVKYDKTITAAESLTAGLFQSTLASFPGASQVFNGGFVAYSMEEKAKMLGLPLEELKSHGVVSAYTAEGMAEQARLLTGADIGVSLTGVAGPDMLEEQPAGTVFIGLATQNKVESIKVLISGQSRLDVRYIATLHAFNMVRKTLLKLENLL.

Belongs to the CinA family.

The protein is Putative competence-damage inducible protein of Streptococcus pyogenes serotype M18 (strain MGAS8232).